We begin with the raw amino-acid sequence, 122 residues long: Basic phospholipase A2 homolog Gln49-PLA2 (122 aa).

Cystine bridges form between Cys26/Cys115, Cys28/Cys44, Cys43/Cys95, Cys49/Cys122, Cys50/Cys88, Cys57/Cys81, and Cys75/Cys86.

This sequence belongs to the phospholipase A2 family. Group II subfamily. Q49 sub-subfamily. In terms of assembly, monomer. As to expression, expressed by the venom gland.

It localises to the secreted. Snake venom phospholipase A2 (PLA2) homolog that shows local myotoxicity, apparent anticoagulant activity, and neurotoxicity. Shows analgesic effect on mice due to a decrease of action potentials and nerve conduction velocity. These effects are caused by inhibition of voltage-gated ion channels (potassium (Kv) and sodium (Nav)). In addition, analgesic effects are antagonized by naloxone, implying the mechanism of action is correlated with opioid receptors (probably indirectly). Does not show detectable PLA2 activity on egg yolk phospholipids. The sequence is that of Basic phospholipase A2 homolog Gln49-PLA2 from Gloydius ussuriensis (Ussuri mamushi).